The following is a 203-amino-acid chain: E3 ubiquitin-protein ligase RNF152 (203 aa).

The RING-type zinc-finger motif lies at 12-55 (CQICFNYYSPRRRPKLLDCKHTCCSVCLQQMRTSQKDVRCPWCR). Residues 106-165 (ISKERALLPGDMGCRLLPGSQQKSVTVVTIPAEQQPLQGGAPQEAVEEEQDRRGVVKSST) are necessary for interaction with RRAGA. Residues 167-187 (SGVCTVILVACVLVFLLGIVL) form a helical membrane-spanning segment.

Belongs to the RNF152 family. In terms of assembly, interacts with RRAGA (inactive GDP-bound form); stimulated by amino acid starvation. Interacts with SEC16A. Ubiquitinated. Autoubiquitinated in vitro, leading to its degradation by the proteasome. As to expression, widely expressed.

It is found in the lysosome membrane. The catalysed reaction is S-ubiquitinyl-[E2 ubiquitin-conjugating enzyme]-L-cysteine + [acceptor protein]-L-lysine = [E2 ubiquitin-conjugating enzyme]-L-cysteine + N(6)-ubiquitinyl-[acceptor protein]-L-lysine.. It functions in the pathway protein modification; protein ubiquitination. E3 ubiquitin-protein ligase that acts as a negative regulator of mTORC1 signaling by mediating ubiquitination of RagA/RRAGA and RHEB. Catalyzes 'Lys-63'-linked polyubiquitination of RagA/RRAGA in response to amino acid starvation, thereby regulating mTORC1 signaling. Also mediates monoubiquitination of RHEB, promoting its association with the TSC-TBC complex and subsequent inhibition. Also mediates 'Lys-48'-linked polyubiquitination of target proteins and their subsequent targeting to the proteasome for degradation. Induces apoptosis when overexpressed. This Homo sapiens (Human) protein is E3 ubiquitin-protein ligase RNF152.